The sequence spans 375 residues: MKTKGALIWEFNQPWSVEEIEIGDPRKDEVKIQMEAAGMCRSDHHLVTGDIPMAGFPVLGGHEGAGIVTEVGPGVDDFAPGDHVVLAFIPSCGKCPSCQAGMRNLCDLGAGLLAGESVTDGSFRIQARGQNVYPMTLLGTFSPYMVVHRSSVVKIDPSVPFEVACLVGCGVTTGYGSAVRTADVRPGDDVAIVGLGGVGMAALQGAVSAGARYVFAVEPVEWKRDQALKFGATHVYPDINAALMGIAEVTYGLMAQKVIITVGKLDGADVDSYLTITAKGGTCVLTAIGSLVDTQVTLNLAMLTLLQKNIQGTIFGGGNPHYDIPKLLSMYKAGKLNLDDMVTTAYKLEQINDGYQDMLNGKNIRGVIRYTDDDR.

Positions 40, 62, 92, 95, 98, 106, and 169 each coordinate Zn(2+).

This sequence belongs to the zinc-containing alcohol dehydrogenase family. Requires Zn(2+) as cofactor.

It is found in the cytoplasm. It catalyses the reaction a primary alcohol + NAD(+) = an aldehyde + NADH + H(+). It carries out the reaction a secondary alcohol + NAD(+) = a ketone + NADH + H(+). The polypeptide is Alcohol dehydrogenase B (adhB) (Mycobacterium bovis (strain ATCC BAA-935 / AF2122/97)).